Consider the following 25-residue polypeptide: Caerin-2.5 (25 aa).

In terms of tissue distribution, expressed by the skin parotoid and/or rostral glands.

Its subcellular location is the secreted. Its function is as follows. Antibacterial peptide, that adopts an alpha helical conformation which can disrupt bacterial membranes. Each caerin displays a different antimicrobial specificity. In Ranoidea gilleni (Centralian tree frog), this protein is Caerin-2.5.